The sequence spans 526 residues: Peptide chain release factor 3 (526 aa).

The region spanning 11-277 (SKRRTFAIIS…SLIKWAPSPL (267 aa)) is the tr-type G domain. Residues 20–27 (SHPDAGKT), 88–92 (DTPGH), and 142–145 (NKLD) contribute to the GTP site.

This sequence belongs to the TRAFAC class translation factor GTPase superfamily. Classic translation factor GTPase family. PrfC subfamily.

Its subcellular location is the cytoplasm. Functionally, increases the formation of ribosomal termination complexes and stimulates activities of RF-1 and RF-2. It binds guanine nucleotides and has strong preference for UGA stop codons. It may interact directly with the ribosome. The stimulation of RF-1 and RF-2 is significantly reduced by GTP and GDP, but not by GMP. The chain is Peptide chain release factor 3 from Buchnera aphidicola subsp. Acyrthosiphon pisum (strain 5A).